Here is a 122-residue protein sequence, read N- to C-terminus: Large ribosomal subunit protein uL14 (122 aa).

Belongs to the universal ribosomal protein uL14 family. In terms of assembly, part of the 50S ribosomal subunit. Forms a cluster with proteins L3 and L19. In the 70S ribosome, L14 and L19 interact and together make contacts with the 16S rRNA in bridges B5 and B8.

Functionally, binds to 23S rRNA. Forms part of two intersubunit bridges in the 70S ribosome. The polypeptide is Large ribosomal subunit protein uL14 (Polynucleobacter asymbioticus (strain DSM 18221 / CIP 109841 / QLW-P1DMWA-1) (Polynucleobacter necessarius subsp. asymbioticus)).